We begin with the raw amino-acid sequence, 320 residues long: Cytochrome f (320 aa).

An N-terminal signal peptide occupies residues 1-35 (MENRKTFSWLKEQMIRSISVSIMIYVITRTSISNA). Residues Y36, C56, C59, and H60 each coordinate heme. Residues 286 to 306 (VQGLLFFFASVILAQVFLVLK) traverse the membrane as a helical segment.

The protein belongs to the cytochrome f family. In terms of assembly, the 4 large subunits of the cytochrome b6-f complex are cytochrome b6, subunit IV (17 kDa polypeptide, petD), cytochrome f and the Rieske protein, while the 4 small subunits are PetG, PetL, PetM and PetN. The complex functions as a dimer. The cofactor is heme.

The protein localises to the plastid. The protein resides in the chloroplast thylakoid membrane. Functionally, component of the cytochrome b6-f complex, which mediates electron transfer between photosystem II (PSII) and photosystem I (PSI), cyclic electron flow around PSI, and state transitions. The sequence is that of Cytochrome f from Saccharum hybrid (Sugarcane).